The sequence spans 176 residues: Inorganic pyrophosphatase (176 aa).

3 residues coordinate substrate: K30, R44, and Y56. Mg(2+) is bound by residues D66, D71, and D103. Y142 provides a ligand contact to substrate.

This sequence belongs to the PPase family. As to quaternary structure, homohexamer. Mg(2+) is required as a cofactor.

The protein resides in the cytoplasm. The catalysed reaction is diphosphate + H2O = 2 phosphate + H(+). In terms of biological role, catalyzes the hydrolysis of inorganic pyrophosphate (PPi) forming two phosphate ions. This chain is Inorganic pyrophosphatase, found in Escherichia coli O6:H1 (strain CFT073 / ATCC 700928 / UPEC).